A 478-amino-acid chain; its full sequence is Methylenetetrahydrofolate--tRNA-(uracil-5-)-methyltransferase TrmFO (478 aa).

16 to 21 (GAGLAG) is an FAD binding site. Residues 429-448 (PLANPPTKGPDGKRLRGPEK) form a disordered region. Basic and acidic residues predominate over residues 438-448 (PDGKRLRGPEK).

It belongs to the MnmG family. TrmFO subfamily. Requires FAD as cofactor.

Its subcellular location is the cytoplasm. It catalyses the reaction uridine(54) in tRNA + (6R)-5,10-methylene-5,6,7,8-tetrahydrofolate + NADH + H(+) = 5-methyluridine(54) in tRNA + (6S)-5,6,7,8-tetrahydrofolate + NAD(+). The catalysed reaction is uridine(54) in tRNA + (6R)-5,10-methylene-5,6,7,8-tetrahydrofolate + NADPH + H(+) = 5-methyluridine(54) in tRNA + (6S)-5,6,7,8-tetrahydrofolate + NADP(+). In terms of biological role, catalyzes the folate-dependent formation of 5-methyl-uridine at position 54 (M-5-U54) in all tRNAs. The chain is Methylenetetrahydrofolate--tRNA-(uracil-5-)-methyltransferase TrmFO from Rhodopseudomonas palustris (strain ATCC BAA-98 / CGA009).